We begin with the raw amino-acid sequence, 289 residues long: NAD(P)H-hydrate epimerase (289 aa).

Residues 71-277 (AQTIDNELMS…SIVEKYNLKI (207 aa)) enclose the YjeF N-terminal domain. (6S)-NADPHX is bound at residue 122-126 (NNGGD). K(+)-binding residues include N123 and D185. Residues 189 to 195 (GFSFRGE) and D218 contribute to the (6S)-NADPHX site. S221 is a binding site for K(+).

It belongs to the NnrE/AIBP family. Requires K(+) as cofactor.

The enzyme catalyses (6R)-NADHX = (6S)-NADHX. The catalysed reaction is (6R)-NADPHX = (6S)-NADPHX. Its function is as follows. Catalyzes the epimerization of the S- and R-forms of NAD(P)HX, a damaged form of NAD(P)H that is a result of enzymatic or heat-dependent hydration. This is a prerequisite for the S-specific NAD(P)H-hydrate dehydratase to allow the repair of both epimers of NAD(P)HX. In Plasmodium knowlesi (strain H), this protein is NAD(P)H-hydrate epimerase.